The primary structure comprises 606 residues: Ubiquitin carboxyl-terminal hydrolase 2 (606 aa).

The tract at residues 1–201 (MSQLSSTLKR…RSEYLADYLE (201 aa)) is necessary for interaction with MDM4. Disordered stretches follow at residues 53-112 (PSPP…GGSG) and 207-228 (ASAP…LSPT). Basic and acidic residues predominate over residues 90-100 (KRAESQTRGTE). The 333-residue stretch at 268 to 600 (AGLRNLGNTC…DAYLLFYELA (333 aa)) folds into the USP domain. Cysteine 277 serves as the catalytic Nucleophile. The necessary for interaction with MDM4 stretch occupies residues 404 to 504 (YLEREDSRIG…FPKILVLHLK (101 aa)). 4 residues coordinate Zn(2+): cysteine 426, cysteine 429, cysteine 477, and cysteine 480. Histidine 558 acts as the Proton acceptor in catalysis.

The protein belongs to the peptidase C19 family. USP2 subfamily. As to quaternary structure, homooligomer. Found in trimeric complex with MDM2 and MDM4 and USP2. Interacts with CCND1; the interaction is direct and promotes its stabilization by antagonizing ubiquitin-dependent degradation. Interacts (via N-terminus and C-terminus) with MDM2. Interacts with MDM4 and PER1. Interacts with KCNQ1; counteracts the NEDD4L-specific down-regulation of I(Ks) and restores plasma membrane localization of KCNQ1.

It is found in the cytoplasm. Its subcellular location is the perinuclear region. The catalysed reaction is Thiol-dependent hydrolysis of ester, thioester, amide, peptide and isopeptide bonds formed by the C-terminal Gly of ubiquitin (a 76-residue protein attached to proteins as an intracellular targeting signal).. With respect to regulation, cleavage is inhibited by ubiquitin in a dosage-dependent manner. Cleavage is blocked by ubiquitin aldehyde. Hydrolase that deubiquitinates polyubiquitinated target proteins such as MDM2, MDM4 and CCND1. Possesses both ubiquitin-specific peptidase and isopeptidase activities. Deubiquitinates MDM2 without reversing MDM2-mediated p53/TP53 ubiquitination and thus indirectly promotes p53/TP53 degradation and limits p53 activity. Has no deubiquitinase activity against p53/TP53. Prevents MDM2-mediated degradation of MDM4. Plays a role in the G1/S cell-cycle progression in normal and cancer cells. Plays a role in the regulation of myogenic differentiation of embryonic muscle cells. Regulates the circadian clock by modulating its intrinsic circadian rhythm and its capacity to respond to external cues. Associates with clock proteins and deubiquitinates core clock component PER1 but does not affect its overall stability. Regulates the nucleocytoplasmic shuttling and nuclear retention of PER1 and its repressive role on the clock transcription factors CLOCK and BMAL1. The sequence is that of Ubiquitin carboxyl-terminal hydrolase 2 (USP2) from Bos taurus (Bovine).